The sequence spans 189 residues: Tumor necrosis factor alpha-induced protein 8 (189 aa).

The protein belongs to the TNFAIP8 family.

It localises to the cytoplasm. Acts as a negative mediator of apoptosis. The protein is Tumor necrosis factor alpha-induced protein 8 (tnfaip8) of Xenopus laevis (African clawed frog).